Consider the following 286-residue polypeptide: Large ribosomal subunit protein uL3 (286 aa).

N5-methylglutamine is present on Gln152. The segment covering 246-265 (EAAAAAAAAEEQAAMEAAEA) has biased composition (low complexity). The segment at 246–286 (EAAAAAAAAEEQAAMEAAEAAEAKTDTVAEAEAAEKKEGDA) is disordered. Residues 266–286 (AEAKTDTVAEAEAAEKKEGDA) are compositionally biased toward basic and acidic residues.

The protein belongs to the universal ribosomal protein uL3 family. As to quaternary structure, part of the 50S ribosomal subunit. Forms a cluster with proteins L14 and L19. In terms of processing, methylated by PrmB.

One of the primary rRNA binding proteins, it binds directly near the 3'-end of the 23S rRNA, where it nucleates assembly of the 50S subunit. In Roseobacter denitrificans (strain ATCC 33942 / OCh 114) (Erythrobacter sp. (strain OCh 114)), this protein is Large ribosomal subunit protein uL3.